A 143-amino-acid polypeptide reads, in one-letter code: Large ribosomal subunit protein uL11 (143 aa).

It belongs to the universal ribosomal protein uL11 family. Part of the ribosomal stalk of the 50S ribosomal subunit. Interacts with L10 and the large rRNA to form the base of the stalk. L10 forms an elongated spine to which L12 dimers bind in a sequential fashion forming a multimeric L10(L12)X complex. Post-translationally, one or more lysine residues are methylated.

Its function is as follows. Forms part of the ribosomal stalk which helps the ribosome interact with GTP-bound translation factors. The sequence is that of Large ribosomal subunit protein uL11 from Bifidobacterium longum (strain DJO10A).